Reading from the N-terminus, the 357-residue chain is Homoserine kinase (357 aa).

The protein belongs to the GHMP kinase family. Homoserine kinase subfamily. As to quaternary structure, homodimer.

The catalysed reaction is L-homoserine + ATP = O-phospho-L-homoserine + ADP + H(+). It participates in amino-acid biosynthesis; L-threonine biosynthesis; L-threonine from L-aspartate: step 4/5. In terms of biological role, commits homoserine to the threonine biosynthesis pathway by catalyzing its O-phosphorylation. The protein is Homoserine kinase (THR1) of Candida albicans (strain SC5314 / ATCC MYA-2876) (Yeast).